Reading from the N-terminus, the 427-residue chain is MSAIVDIIGREILDSRGNPTVECDVLLESGTMGRAAVPSGASTGSREAIELRDGEAGRYGGKGVLKAVEHINTEISEAIMGLDASEQAFLDKTLLELDGTDNKSRLGANAMLAVSMAVAKAAAEEAGLPLYRYFGGSGAMQLPVPMMNIVNGGAHANNSLDIQEFMIVPVSQPTFREALRCGAEVFHALKKILGDRGMSTAVGDEGGFAPNFGSNDECLSTILQAIEKAGYRAGEDVLLALDCAASEFYHDGKYQLAGEGLQLSSAEFTDYLATLADKFPIVSIEDGMHEGDWDGWKLLTERLGKKVQLVGDDLFVTNTRILKEGIEKGIANSILIKINQIGTLTETFAAIEMAKRARYTAVISHRSGETEDSTIADIAVGLNAGQIKTGSLSRSDRISKYNQLLRIEEDLGDIASYPGKSAFYNLR.

Residue Gln-163 participates in (2R)-2-phosphoglycerate binding. Glu-205 functions as the Proton donor in the catalytic mechanism. Positions 242, 285, and 312 each coordinate Mg(2+). 4 residues coordinate (2R)-2-phosphoglycerate: Lys-337, Arg-366, Ser-367, and Lys-388. Lys-337 (proton acceptor) is an active-site residue.

It belongs to the enolase family. Mg(2+) is required as a cofactor.

It localises to the cytoplasm. The protein localises to the secreted. It is found in the cell surface. It catalyses the reaction (2R)-2-phosphoglycerate = phosphoenolpyruvate + H2O. Its pathway is carbohydrate degradation; glycolysis; pyruvate from D-glyceraldehyde 3-phosphate: step 4/5. Its function is as follows. Catalyzes the reversible conversion of 2-phosphoglycerate (2-PG) into phosphoenolpyruvate (PEP). It is essential for the degradation of carbohydrates via glycolysis. The protein is Enolase of Burkholderia mallei (strain NCTC 10247).